Here is a 469-residue protein sequence, read N- to C-terminus: Adenosylhomocysteinase (469 aa).

T63, D139, and E164 together coordinate substrate. Residue 165–167 (TTT) participates in NAD(+) binding. Residues K194 and D198 each contribute to the substrate site. NAD(+) is bound by residues N199, 228–233 (GYGDVG), E251, N300, 321–323 (IGH), and N375.

It belongs to the adenosylhomocysteinase family. NAD(+) is required as a cofactor.

It localises to the cytoplasm. The catalysed reaction is S-adenosyl-L-homocysteine + H2O = L-homocysteine + adenosine. It participates in amino-acid biosynthesis; L-homocysteine biosynthesis; L-homocysteine from S-adenosyl-L-homocysteine: step 1/1. Functionally, may play a key role in the regulation of the intracellular concentration of adenosylhomocysteine. This Pseudomonas aeruginosa (strain LESB58) protein is Adenosylhomocysteinase.